A 282-amino-acid polypeptide reads, in one-letter code: Elongation factor Ts (282 aa).

The segment at 79–82 (TDFV) is involved in Mg(2+) ion dislocation from EF-Tu.

This sequence belongs to the EF-Ts family.

The protein resides in the cytoplasm. Associates with the EF-Tu.GDP complex and induces the exchange of GDP to GTP. It remains bound to the aminoacyl-tRNA.EF-Tu.GTP complex up to the GTP hydrolysis stage on the ribosome. This Colwellia psychrerythraea (strain 34H / ATCC BAA-681) (Vibrio psychroerythus) protein is Elongation factor Ts.